The sequence spans 97 residues: Large ribosomal subunit protein uL23 (97 aa).

Belongs to the universal ribosomal protein uL23 family. As to quaternary structure, part of the 50S ribosomal subunit. Contacts protein L29, and trigger factor when it is bound to the ribosome.

In terms of biological role, one of the early assembly proteins it binds 23S rRNA. One of the proteins that surrounds the polypeptide exit tunnel on the outside of the ribosome. Forms the main docking site for trigger factor binding to the ribosome. The sequence is that of Large ribosomal subunit protein uL23 from Rhizobium etli (strain CIAT 652).